The following is a 156-amino-acid chain: Small ribosomal subunit protein uS7 (156 aa).

This sequence belongs to the universal ribosomal protein uS7 family. In terms of assembly, part of the 30S ribosomal subunit. Contacts proteins S9 and S11.

Its function is as follows. One of the primary rRNA binding proteins, it binds directly to 16S rRNA where it nucleates assembly of the head domain of the 30S subunit. Is located at the subunit interface close to the decoding center, probably blocks exit of the E-site tRNA. This Bartonella quintana (strain Toulouse) (Rochalimaea quintana) protein is Small ribosomal subunit protein uS7.